Reading from the N-terminus, the 499-residue chain is Replication factor C large subunit (499 aa).

Position 50–57 (50–57 (GPPGVGKT)) interacts with ATP. The tract at residues 428-499 (EAERRVEAAE…QATLFDFLKK (72 aa)) is disordered. A compositionally biased stretch (acidic residues) spans 436–472 (AEEEETMEAGEPEEELEEVEEEELTEEELEEAEEEIE). A compositionally biased stretch (basic and acidic residues) spans 473-484 (TVGKKEKPEKEK).

This sequence belongs to the activator 1 small subunits family. RfcL subfamily. In terms of assembly, heteromultimer composed of small subunits (RfcS) and large subunits (RfcL).

In terms of biological role, part of the RFC clamp loader complex which loads the PCNA sliding clamp onto DNA. The sequence is that of Replication factor C large subunit from Thermococcus kodakarensis (strain ATCC BAA-918 / JCM 12380 / KOD1) (Pyrococcus kodakaraensis (strain KOD1)).